A 270-amino-acid polypeptide reads, in one-letter code: Cyclic pyranopterin monophosphate synthase, mitochondrial (270 aa).

A mitochondrion-targeting transit peptide spans Met-1–Glu-32. Substrate is bound by residues Leu-187 to His-189 and Met-225 to Glu-226. Residue Asp-240 is part of the active site.

Belongs to the MoaC family. Homohexamer. As to expression, abundantly expressed in the roots.

Its subcellular location is the mitochondrion matrix. The catalysed reaction is (8S)-3',8-cyclo-7,8-dihydroguanosine 5'-triphosphate = cyclic pyranopterin phosphate + diphosphate. The protein operates within cofactor biosynthesis; molybdopterin biosynthesis. In terms of biological role, catalyzes the conversion of (8S)-3',8-cyclo-7,8-dihydroguanosine 5'-triphosphate to cyclic pyranopterin monophosphate (cPMP). The chain is Cyclic pyranopterin monophosphate synthase, mitochondrial (CNX3) from Arabidopsis thaliana (Mouse-ear cress).